Consider the following 1332-residue polypeptide: Sister chromatid cohesion protein PDS5 homolog A (1332 aa).

Met-1 is subject to N-acetylmethionine. The HEAT repeat unit spans residues Ala-392–Tyr-428. Position 1096 is a phosphoserine (Ser-1096). Residues Gly-1138 to Arg-1332 form a disordered region. Lys-1145 carries the N6-acetyllysine modification. The segment covering Gly-1160–Leu-1173 has biased composition (polar residues). Phosphoserine occurs at positions 1174 and 1194. Position 1207 is a phosphothreonine (Thr-1207). At Lys-1210 the chain carries N6-acetyllysine. Residues Ser-1222–Ser-1232 are compositionally biased toward polar residues. N6-acetyllysine is present on Lys-1288. Ser-1303 bears the Phosphoserine mark. Basic and acidic residues predominate over residues Asp-1316–Arg-1332.

The protein belongs to the PDS5 family. Interacts with the cohesin complex. Interacts with WAPL (via FGF motifs) or CDCA5 (via the FGF motif); the interaction is direct, cohesin-dependent and competitive. Interacts with SMC3. Interacts with TP63.

Its subcellular location is the nucleus. Functionally, probable regulator of sister chromatid cohesion in mitosis which may stabilize cohesin complex association with chromatin. May couple sister chromatid cohesion during mitosis to DNA replication. Cohesion ensures that chromosome partitioning is accurate in both meiotic and mitotic cells and plays an important role in DNA repair. The protein is Sister chromatid cohesion protein PDS5 homolog A (Pds5a) of Mus musculus (Mouse).